Reading from the N-terminus, the 361-residue chain is Homocitrate synthase (361 aa).

Residues 1–249 (MILDSTLREG…VKKYRLDKLY (249 aa)) enclose the Pyruvate carboxyltransferase domain. Arg8 is a binding site for 2-oxoglutarate. A Mg(2+)-binding site is contributed by Glu9. 3 residues coordinate 2-oxoglutarate: His68, Arg128, and Thr162. His188 and His190 together coordinate Mg(2+). Catalysis depends on His282, which acts as the Proton acceptor.

It belongs to the alpha-IPM synthase/homocitrate synthase family. Homocitrate synthase LYS20/LYS21 subfamily. Mg(2+) is required as a cofactor. It depends on Mn(2+) as a cofactor.

It carries out the reaction acetyl-CoA + 2-oxoglutarate + H2O = (2R)-homocitrate + CoA + H(+). The protein operates within amino-acid biosynthesis; L-lysine biosynthesis via AAA pathway; L-alpha-aminoadipate from 2-oxoglutarate: step 1/5. In terms of biological role, catalyzes the aldol-type condensation of 2-oxoglutarate with acetyl-CoA to yield homocitrate. Carries out the first step of the alpha-aminoadipate (AAA) lysine biosynthesis pathway. The polypeptide is Homocitrate synthase (Pyrococcus horikoshii (strain ATCC 700860 / DSM 12428 / JCM 9974 / NBRC 100139 / OT-3)).